Consider the following 463-residue polypeptide: Dopaminechrome tautomerase (463 aa).

It belongs to the major royal jelly protein family.

The protein localises to the secreted. It carries out the reaction dopaminechrome = 5,6-dihydroxyindole. It participates in pigment biosynthesis; melanin biosynthesis. Its function is as follows. Catalyzes the conversion of dopaminechrome to 5,6-dihydroxyindole in the eumelanin biosynthetic pathway originating from dopamine. Catalyzes tautomerization of dopaminechrome to 5,6-dihydroxyindole during eumelanin biosynthesis. Acts both dopaminechrome and N-methyl dopaminechrome but not on dopachrome or other aminochromes tested. This chain is Dopaminechrome tautomerase, found in Drosophila melanogaster (Fruit fly).